A 424-amino-acid polypeptide reads, in one-letter code: MTLNIKNHPCFNDSSRHTYGRIHLPVAPKCNIQCNYCNRKFDCMNENRPGITSKVLSPRQALYYLDNALKLSPNISVVGIAGPGDPFANPEETMETLRLVREKYPEMLLCVATNGLDMLPYIEELAELQVSHVTLTINAIDPEIGQEIYAWVRYQKKMYRDRQAAELLLENQLAALQKLKRYGVTAKVNSIIIPGVNDQHVIEVARQVASMGADILNALPYYNTTETVFENIPEPDPMMVRKIQEEAGKLLPQMKHCARCRADAVGIIGEINSDEMMAKLAEAALMPKNPDEHRPYIAVASLEGVLINQHLGEADRFLVYALDEEKKSCTLVDSRQAPPPGGGKLRWEALAAKLSDCRAVLVNSAGDSPQSVLKASGIDVMSIEGVIEEAVYGVFTGQNLKHLMKSSQIHACKTSCGGDGNGCD.

The region spanning 12 to 261 (NDSSRHTYGR…PQMKHCARCR (250 aa)) is the Radical SAM core domain. [4Fe-4S] cluster is bound by residues cysteine 30, cysteine 34, and cysteine 37. S-adenosyl-L-methionine contacts are provided by glycine 84, threonine 136, and valine 188. [4Fe-4S] cluster contacts are provided by cysteine 257 and cysteine 260.

Belongs to the radical SAM superfamily. NifB family. Monomer. [4Fe-4S] cluster is required as a cofactor.

It participates in cofactor biosynthesis; Fe-Mo cofactor biosynthesis. In terms of biological role, involved in the biosynthesis of the iron-molybdenum cofactor (FeMo-co or M-cluster) found in the dinitrogenase enzyme of the nitrogenase complex in nitrogen-fixing microorganisms. NifB catalyzes the crucial step of radical SAM-dependent carbide insertion that occurs concomitant with the insertion of a 9th sulfur and the rearrangement/coupling of two [4Fe-4S] clusters into a [8Fe-9S-C] cluster, the precursor to the M-cluster. The sequence is that of FeMo cofactor biosynthesis protein NifB from Chlorobaculum tepidum (strain ATCC 49652 / DSM 12025 / NBRC 103806 / TLS) (Chlorobium tepidum).